Here is a 262-residue protein sequence, read N- to C-terminus: Type III pantothenate kinase (262 aa).

ATP is bound at residue 12–19 (DIGNTSIA). Substrate contacts are provided by residues tyrosine 94 and 109–112 (GSDV). The Proton acceptor role is filled by aspartate 111. Aspartate 132 contributes to the K(+) binding site. ATP is bound at residue threonine 135. Threonine 187 contributes to the substrate binding site.

Belongs to the type III pantothenate kinase family. Homodimer. The cofactor is NH4(+). K(+) is required as a cofactor.

It is found in the cytoplasm. The catalysed reaction is (R)-pantothenate + ATP = (R)-4'-phosphopantothenate + ADP + H(+). It functions in the pathway cofactor biosynthesis; coenzyme A biosynthesis; CoA from (R)-pantothenate: step 1/5. Its function is as follows. Catalyzes the phosphorylation of pantothenate (Pan), the first step in CoA biosynthesis. This Borrelia garinii subsp. bavariensis (strain ATCC BAA-2496 / DSM 23469 / PBi) (Borreliella bavariensis) protein is Type III pantothenate kinase.